A 239-amino-acid polypeptide reads, in one-letter code: Pyridoxine 5'-phosphate synthase (239 aa).

N9 provides a ligand contact to 3-amino-2-oxopropyl phosphate. 1-deoxy-D-xylulose 5-phosphate is bound at residue 11–12 (DH). Residue R20 coordinates 3-amino-2-oxopropyl phosphate. The active-site Proton acceptor is H45. 1-deoxy-D-xylulose 5-phosphate contacts are provided by R47 and H52. Catalysis depends on E72, which acts as the Proton acceptor. Position 102 (T102) interacts with 1-deoxy-D-xylulose 5-phosphate. The active-site Proton donor is the H189. 3-amino-2-oxopropyl phosphate is bound by residues G190 and 211-212 (GH).

This sequence belongs to the PNP synthase family. As to quaternary structure, homooctamer; tetramer of dimers.

It is found in the cytoplasm. The enzyme catalyses 3-amino-2-oxopropyl phosphate + 1-deoxy-D-xylulose 5-phosphate = pyridoxine 5'-phosphate + phosphate + 2 H2O + H(+). It participates in cofactor biosynthesis; pyridoxine 5'-phosphate biosynthesis; pyridoxine 5'-phosphate from D-erythrose 4-phosphate: step 5/5. In terms of biological role, catalyzes the complicated ring closure reaction between the two acyclic compounds 1-deoxy-D-xylulose-5-phosphate (DXP) and 3-amino-2-oxopropyl phosphate (1-amino-acetone-3-phosphate or AAP) to form pyridoxine 5'-phosphate (PNP) and inorganic phosphate. The chain is Pyridoxine 5'-phosphate synthase from Ehrlichia chaffeensis (strain ATCC CRL-10679 / Arkansas).